The chain runs to 62 residues: Alpha-conotoxin-like S1.1 (62 aa).

The first 21 residues, 1–21 (MGMRMMFTVFLLVVLAITVVS), serve as a signal peptide directing secretion. The propeptide occupies 22–48 (FPLDRESDGANAEARTHDHEKHALDRN). 2 disulfides stabilise this stretch: C50-C56 and C51-C61. At C61 the chain carries Cysteine amide.

It belongs to the conotoxin A superfamily. As to expression, expressed by the venom duct.

The protein localises to the secreted. Its function is as follows. Alpha-conotoxins act on postsynaptic membranes, they bind to the nicotinic acetylcholine receptors (nAChR) and thus inhibit them. This chain is Alpha-conotoxin-like S1.1, found in Conus striatus (Striated cone).